The primary structure comprises 383 residues: uncharacterized protein (383 aa).

The protein belongs to the peptidase M20 family.

This is an uncharacterized protein from Staphylococcus aureus (strain N315).